The chain runs to 349 residues: DNA polymerase IV (349 aa).

Residues 7-188 form the UmuC domain; that stretch reads IIHIDMDYFF…LPVKKLFGVG (182 aa). Aspartate 11 and aspartate 106 together coordinate Mg(2+). Glutamate 107 is an active-site residue.

Belongs to the DNA polymerase type-Y family. As to quaternary structure, monomer. Mg(2+) serves as cofactor.

It is found in the cytoplasm. It carries out the reaction DNA(n) + a 2'-deoxyribonucleoside 5'-triphosphate = DNA(n+1) + diphosphate. Its function is as follows. Poorly processive, error-prone DNA polymerase involved in untargeted mutagenesis. Copies undamaged DNA at stalled replication forks, which arise in vivo from mismatched or misaligned primer ends. These misaligned primers can be extended by PolIV. Exhibits no 3'-5' exonuclease (proofreading) activity. May be involved in translesional synthesis, in conjunction with the beta clamp from PolIII. The protein is DNA polymerase IV of Francisella tularensis subsp. holarctica (strain FTNF002-00 / FTA).